The sequence spans 160 residues: Globin-like protein (160 aa).

The Globin domain occupies 2–152 (SMTRQEIQDL…FNAECQVHLK (151 aa)). Position 101 (His-101) interacts with heme.

This sequence belongs to the globin family.

The protein resides in the cytoplasm. Its function is as follows. May be a globin and may play a role in oxygen transport. This Caenorhabditis briggsae protein is Globin-like protein (glb-1).